We begin with the raw amino-acid sequence, 118 residues long: Large ribosomal subunit protein bL20 (118 aa).

Belongs to the bacterial ribosomal protein bL20 family.

Binds directly to 23S ribosomal RNA and is necessary for the in vitro assembly process of the 50S ribosomal subunit. It is not involved in the protein synthesizing functions of that subunit. This chain is Large ribosomal subunit protein bL20, found in Campylobacter curvus (strain 525.92).